We begin with the raw amino-acid sequence, 506 residues long: D-alanine--D-alanyl carrier protein ligase (506 aa).

152-153 (TS) contributes to the ATP binding site. Aspartate 197 contributes to the D-alanine binding site. 292–297 (NTYGPT) contributes to the ATP binding site. Valine 301 is a D-alanine binding site. Residues aspartate 383, 395 to 398 (YRGR), and lysine 494 each bind ATP. Lysine 494 serves as a coordination point for D-alanine.

This sequence belongs to the ATP-dependent AMP-binding enzyme family. DltA subfamily.

The protein resides in the cytoplasm. The enzyme catalyses holo-[D-alanyl-carrier protein] + D-alanine + ATP = D-alanyl-[D-alanyl-carrier protein] + AMP + diphosphate. It functions in the pathway cell wall biogenesis; lipoteichoic acid biosynthesis. Its function is as follows. Catalyzes the first step in the D-alanylation of lipoteichoic acid (LTA), the activation of D-alanine and its transfer onto the D-alanyl carrier protein (Dcp) DltC. In an ATP-dependent two-step reaction, forms a high energy D-alanyl-AMP intermediate, followed by transfer of the D-alanyl residue as a thiol ester to the phosphopantheinyl prosthetic group of the Dcp. D-alanylation of LTA plays an important role in modulating the properties of the cell wall in Gram-positive bacteria, influencing the net charge of the cell wall. The protein is D-alanine--D-alanyl carrier protein ligase of Lacticaseibacillus casei (strain BL23) (Lactobacillus casei).